We begin with the raw amino-acid sequence, 218 residues long: MAFKDTFNKMISYFDTDEVNEVEEDVAASTDNVIPRSQQSVRASSHPKQEPRNNHVQQDHQARSQEQTRSQMHPKHGTSERYYQQSQPKEGHEMVDRRKRMSTSSIANRREQYQQSTCSDQTTIALKYPRKYEDAQEIVDLLIVNECVLIDFQFMLDAQARRCLDFIDGASKVLYGSLQKVGSSMYLLAPSNVSVNIEEMTIPHTTQDIGFDFDMKRR.

The disordered stretch occupies residues 25 to 115 (DVAASTDNVI…IANRREQYQQ (91 aa)). The span at 29–43 (STDNVIPRSQQSVRA) shows a compositional bias: polar residues. The segment covering 47–63 (PKQEPRNNHVQQDHQAR) has biased composition (basic and acidic residues). Polar residues predominate over residues 102–115 (STSSIANRREQYQQ).

This sequence belongs to the SepF family. Homodimer. Interacts with FtsZ.

It is found in the cytoplasm. Cell division protein that is part of the divisome complex and is recruited early to the Z-ring. Probably stimulates Z-ring formation, perhaps through the cross-linking of FtsZ protofilaments. Its function overlaps with FtsA. The polypeptide is Cell division protein SepF (Streptococcus pyogenes serotype M5 (strain Manfredo)).